The sequence spans 252 residues: Delta-like protein dsl-1 (252 aa).

An N-terminal signal peptide occupies residues M1–S17. Residues I120 to C164 enclose the DSL domain. 6 disulfide bridges follow: C122/C131, C135/C147, C155/C164, C173/C181, C175/C197, and C199/C209. The EGF-like domain occupies P169 to E210.

May interact with lin-12/Notch receptor.

The protein resides in the secreted. Its function is as follows. Probable secreted Notch ligand involved in the mediation of Notch signaling. Involved in the lin-12/Notch pathway-mediated signaling of cell fate in vulval precursor cells (VPCs), acting redundantly with lag-2, apx-1 and osm-11. May also be involved in glp-1/Notch signaling. The chain is Delta-like protein dsl-1 from Caenorhabditis elegans.